Reading from the N-terminus, the 445-residue chain is Phosphoglucosamine mutase (445 aa).

Ser102 acts as the Phosphoserine intermediate in catalysis. Mg(2+) contacts are provided by Ser102, Asp241, Asp243, and Asp245. At Ser102 the chain carries Phosphoserine.

It belongs to the phosphohexose mutase family. Requires Mg(2+) as cofactor. In terms of processing, activated by phosphorylation.

It carries out the reaction alpha-D-glucosamine 1-phosphate = D-glucosamine 6-phosphate. In terms of biological role, catalyzes the conversion of glucosamine-6-phosphate to glucosamine-1-phosphate. This Pectobacterium carotovorum subsp. carotovorum (strain PC1) protein is Phosphoglucosamine mutase.